The primary structure comprises 460 residues: Phosphomethylpyrimidine synthase (460 aa).

Substrate-binding positions include Asn80, Met109, Tyr139, His175, 195–197 (SRG), 236–239 (DSLR), and Glu275. Residue His279 coordinates Zn(2+). Tyr302 lines the substrate pocket. His343 contributes to the Zn(2+) binding site. [4Fe-4S] cluster-binding residues include Cys423, Cys426, and Cys431.

The protein belongs to the ThiC family. [4Fe-4S] cluster is required as a cofactor.

It catalyses the reaction 5-amino-1-(5-phospho-beta-D-ribosyl)imidazole + S-adenosyl-L-methionine = 4-amino-2-methyl-5-(phosphooxymethyl)pyrimidine + CO + 5'-deoxyadenosine + formate + L-methionine + 3 H(+). It functions in the pathway cofactor biosynthesis; thiamine diphosphate biosynthesis. In terms of biological role, catalyzes the synthesis of the hydroxymethylpyrimidine phosphate (HMP-P) moiety of thiamine from aminoimidazole ribotide (AIR) in a radical S-adenosyl-L-methionine (SAM)-dependent reaction. The polypeptide is Phosphomethylpyrimidine synthase (Microcystis aeruginosa (strain NIES-843 / IAM M-2473)).